A 118-amino-acid chain; its full sequence is Holo-[acyl-carrier-protein] synthase (118 aa).

The Mg(2+) site is built by aspartate 8 and glutamate 57.

This sequence belongs to the P-Pant transferase superfamily. AcpS family. The cofactor is Mg(2+).

Its subcellular location is the cytoplasm. The catalysed reaction is apo-[ACP] + CoA = holo-[ACP] + adenosine 3',5'-bisphosphate + H(+). Functionally, transfers the 4'-phosphopantetheine moiety from coenzyme A to a Ser of acyl-carrier-protein. The polypeptide is Holo-[acyl-carrier-protein] synthase (Pediococcus pentosaceus (strain ATCC 25745 / CCUG 21536 / LMG 10740 / 183-1w)).